A 249-amino-acid chain; its full sequence is Probable transcriptional regulatory protein ZMO0153 (249 aa).

Belongs to the TACO1 family.

Its subcellular location is the cytoplasm. The sequence is that of Probable transcriptional regulatory protein ZMO0153 from Zymomonas mobilis subsp. mobilis (strain ATCC 31821 / ZM4 / CP4).